Reading from the N-terminus, the 238-residue chain is MSNDKIIVALDVPDTESAIALIDKLESVTFWKVGLELFTSSGPRILEVLKSRQKRIFLDLKFHDIPNTVAGACRAAAGYGVDLMTIHATSGRDALKAAKEAVEEGAAQAGVKPPKLIAVTVLTSISARQLALDLKIPSELPEYALDMALMAQEMGLDGAVCSPQEVAHLRQICGDDFVLVCPGVRPTWAEAGDQKRSLTPSQAIQAGADYLVIGRPITAAAEPELAWKRISQELTTVV.

Substrate contacts are provided by residues D11, K32, 59–68, T123, R185, Q194, G214, and R215; that span reads DLKFHDIPNT. K61 acts as the Proton donor in catalysis.

The protein belongs to the OMP decarboxylase family. Type 1 subfamily. Homodimer.

It carries out the reaction orotidine 5'-phosphate + H(+) = UMP + CO2. It participates in pyrimidine metabolism; UMP biosynthesis via de novo pathway; UMP from orotate: step 2/2. Its function is as follows. Catalyzes the decarboxylation of orotidine 5'-monophosphate (OMP) to uridine 5'-monophosphate (UMP). The chain is Orotidine 5'-phosphate decarboxylase from Nostoc sp. (strain PCC 7120 / SAG 25.82 / UTEX 2576).